A 496-amino-acid chain; its full sequence is Probable ATP-dependent DNA helicase RecS (496 aa).

In terms of domain architecture, Helicase ATP-binding spans 25-192; the sequence is IESILSGKDT…MNLLELQHAV (168 aa). Residue 38–45 participates in ATP binding; it reads LPTGGGKS. The DEAH box motif lies at 136–139; it reads DEAH. The Helicase C-terminal domain occupies 219-363; sequence RVIQLVENLQ…EIADVIRVLE (145 aa).

It belongs to the helicase family. RecQ subfamily. In terms of assembly, interacts with SSB (ssbA) and YpbB.

It localises to the cytoplasm. Its subcellular location is the nucleoid. It carries out the reaction Couples ATP hydrolysis with the unwinding of duplex DNA by translocating in the 3'-5' direction.. It catalyses the reaction ATP + H2O = ADP + phosphate + H(+). Functionally, probable 3'-5' DNA helicase. Required in synaptic and/or post-synaptic stages of recombination. Probably has an overlapping function with RecQ. It probably acts to help generate ss-DNA from ds-DNA breaks. In Bacillus subtilis (strain 168), this protein is Probable ATP-dependent DNA helicase RecS.